Here is a 178-residue protein sequence, read N- to C-terminus: Ribosome maturation factor RimM (178 aa).

Residues E99 to F178 form the PRC barrel domain.

It belongs to the RimM family. Binds ribosomal protein uS19.

Its subcellular location is the cytoplasm. Its function is as follows. An accessory protein needed during the final step in the assembly of 30S ribosomal subunit, possibly for assembly of the head region. Essential for efficient processing of 16S rRNA. May be needed both before and after RbfA during the maturation of 16S rRNA. It has affinity for free ribosomal 30S subunits but not for 70S ribosomes. The polypeptide is Ribosome maturation factor RimM (Haemophilus influenzae (strain ATCC 51907 / DSM 11121 / KW20 / Rd)).